Consider the following 901-residue polypeptide: HTH-type transcriptional regulator MalT (901 aa).

39–46 (SPAGYGKT) serves as a coordination point for ATP. Positions 829–894 (ELIRTSPLTQ…AAVQHAQKLL (66 aa)) constitute an HTH luxR-type domain. Residues 853–872 (NEQIAGELEVAATTIKTHIR) constitute a DNA-binding region (H-T-H motif).

This sequence belongs to the MalT family. As to quaternary structure, monomer in solution. Oligomerizes to an active state in the presence of the positive effectors ATP and maltotriose.

Its activity is regulated as follows. Activated by ATP and maltotriose, which are both required for DNA binding. Positively regulates the transcription of the maltose regulon whose gene products are responsible for uptake and catabolism of malto-oligosaccharides. Specifically binds to the promoter region of its target genes, recognizing a short DNA motif called the MalT box. This Escherichia coli O127:H6 (strain E2348/69 / EPEC) protein is HTH-type transcriptional regulator MalT.